Reading from the N-terminus, the 127-residue chain is uncharacterized protein (127 aa).

Residues 1–16 (MLKKIIFGITISLTTG) form the signal peptide. Residue cysteine 17 is the site of N-palmitoyl cysteine attachment. A lipid anchor (S-diacylglycerol cysteine) is attached at cysteine 17. A coiled-coil region spans residues 56–101 (EVREEIQKYRVEIVDINKKKRELYNRLSKEAQSFLAEQQKYKQKLS). The interval 102 to 127 (IPKLLIENDPKNNTANSKDNNDKDMK) is disordered.

It localises to the cell membrane. This is an uncharacterized protein from Rickettsia prowazekii (strain Madrid E).